An 860-amino-acid chain; its full sequence is Ubiquitin carboxyl-terminal hydrolase 13 (860 aa).

A UBP-type; degenerate zinc finger spans residues 168-276 (QVSRHARSLR…EHLLHFGIDM (109 aa)). Zn(2+) contacts are provided by cysteine 192, cysteine 195, cysteine 212, and histidine 225. Positions 318 to 857 (TGIKNLGNSC…LGYMYFYRRL (540 aa)) constitute a USP domain. The Nucleophile role is filled by cysteine 327. Residues 611–636 (DLTPPIVIPEDTRDSSTNNSLESPEI) are disordered. UBA domains lie at 635–676 (EIDE…IIAH) and 710–750 (QPPE…IFTH). A compositionally biased stretch (acidic residues) spans 755-768 (DESEAMSDTADTEP). The disordered stretch occupies residues 755-795 (DESEAMSDTADTEPNDNSFSNANAHTDSSLSPDQDLSSPRV). A compositionally biased stretch (polar residues) spans 769–780 (NDNSFSNANAHT). A compositionally biased stretch (low complexity) spans 781 to 793 (DSSLSPDQDLSSP). Histidine 819 (proton acceptor) is an active-site residue.

It belongs to the peptidase C19 family.

The enzyme catalyses Thiol-dependent hydrolysis of ester, thioester, amide, peptide and isopeptide bonds formed by the C-terminal Gly of ubiquitin (a 76-residue protein attached to proteins as an intracellular targeting signal).. With respect to regulation, specifically inhibited by spautin-1 (specific and potent autophagy inhibitor-1), a derivative of MBCQ that binds to usp13 and inhibits deubiquitinase activity. Functionally, deubiquitinase that mediates deubiquitination of target proteins and is involved in various processes such as autophagy and endoplasmic reticulum-associated degradation (ERAD). The sequence is that of Ubiquitin carboxyl-terminal hydrolase 13 (usp13) from Danio rerio (Zebrafish).